A 716-amino-acid chain; its full sequence is MEDCLHTSSENLSKLVSWAHSHGTICSLIPNLKHLLSEGSHGNLTAMWGCSAGHAYHWPLTATCRAGSQERVCFQDNRSFNSDSPSIIGVPSETQTSPVERYPGRPVKAKLDCNRTRDSCDFSYCSEPSELDETVEEYEDENTLFDMVCESSVTDEDSDFEPQTQRPQSIARKRPGVVPSSLHSSSQTQMVDECSNDVIIKKIKQEIPEDYYIVANAELTGGVDGPALSLTQMAKPKPQTHAGPSCVGSAKLIPHVTSAISTELDPHGMSASPSVISRPIVQKTARVSLASPNRGPPGTHGTNQQVAMQMPVSTSHPNKQISIPLSALQLPGQDEQVASEEFLSHLPSQVSSCEVALSPSVNTEPEVSSSQQQPPVAPAITTEATAQCIPAYSTKLNKFPVFNINDDLNDLCTSAVSPNTTKATRYALNVWRYWCMTNGLKDHTDITKIPAVKLNELLENFYVTVKKSDGSDFLATSLHAIRRGLDRILKNAGVGFSITSSTFSSSTKKLKEKLWVLSKAGMSGARSRNIVYFSLSDEEEMWQAGCLGDDSPITLLSTVVKYNSQYLNMRTLQEHADLMYGDIELLKDPQNQPYFARTDSVKRESRSGSTRVCHGKIYHEHSRGHKQCPYCLLYKYMYIHRPPTQMEAKSPFYLTARKEATDMGSVWYEEQRMGLRSLRGIVPNLAKKVKLENCENFTFVSFTQVSRRLGSHSCCQ.

Disordered regions lie at residues S84–P103 and V153–Q189. Residue S97 is modified to Phosphoserine. Glycyl lysine isopeptide (Lys-Gly) (interchain with G-Cter in SUMO2) cross-links involve residues K201, K204, K237, K283, and K626.

This is an uncharacterized protein from Homo sapiens (Human).